The sequence spans 1654 residues: Adapter protein unc-53 (1654 aa).

A Calponin-homology (CH) domain is found at 6-115; that stretch reads VELIPIYTDW…LLFLLSTYKQ (110 aa). Disordered stretches follow at residues 128-261, 274-364, 381-440, 480-501, 595-626, 650-680, 698-729, and 747-799; these read EQLP…PQTQ, SKLA…GSAT, APII…SSDD, VKST…QPTI, AQVT…GYTS, AQNG…ISTD, SHFV…RAEQ, and AATS…SGQF. Residues 143 to 161 show a composition bias toward low complexity; sequence PSPRVATSATASATNPNSN. A compositionally biased stretch (polar residues) spans 162–174; the sequence is FPQMSTSRLQTPQ. Residues 197–243 are compositionally biased toward low complexity; the sequence is PSSSTTSSNNTNSFRPSSRSSGNNNVGSTISTSAKSLESSSTYSSIS. The span at 244-261 shows a compositional bias: polar residues; the sequence is NLNRPTSQLQKPSRPQTQ. Low complexity predominate over residues 310 to 327; the sequence is LKLKLFSSKNPSSSSNSP. A compositionally biased stretch (basic and acidic residues) spans 388 to 397; it reads DSKRCSKSSE. Positions 407–429 are enriched in low complexity; the sequence is STSPTSSSTEGSLSMHSTSSKSS. Over residues 595-607 the composition is skewed to polar residues; sequence AQVTPPTKTSGNH. Positions 705–722 are enriched in low complexity; the sequence is TSSSSKPRVPSRSSTSVD. Polar residues-rich tracts occupy residues 747-769 and 779-799; these read AATS…SPHL and SMHS…SGQF. The stretch at 962–994 forms a coiled coil; the sequence is LNEKYEHAIRDMARDLECYKNTVDSLTKKQENY. The interval 1059 to 1083 is disordered; it reads LESVASHRSSMSSSSKSSKQEKISL. The span at 1061–1083 shows a compositional bias: low complexity; sequence SVASHRSSMSSSSKSSKQEKISL. Residues 1152-1184 adopt a coiled-coil conformation; the sequence is DRAREVDVLRETVNKLKTENKQLKKEVDKLTNG.

It belongs to the Nav/unc-53 family. Interacts with sem-5. Interacts with cmd-1 in the presence of Ca(2+).

Involved in the migration and outgrowth of muscles, axons and excretory canals. This chain is Adapter protein unc-53 (unc-53), found in Caenorhabditis elegans.